The following is a 342-amino-acid chain: DNA-directed RNA polymerase subunit alpha (342 aa).

An alpha N-terminal domain (alpha-NTD) region spans residues 1-238; it reads MESLNVNAKN…DQLNMFVNFD (238 aa). The interval 254–342 is alpha C-terminal domain (alpha-CTD); sequence FNKNLLRKVD…EMSKKLEEQI (89 aa).

The protein belongs to the RNA polymerase alpha chain family. Homodimer. The RNAP catalytic core consists of 2 alpha, 1 beta, 1 beta' and 1 omega subunit. When a sigma factor is associated with the core the holoenzyme is formed, which can initiate transcription.

It catalyses the reaction RNA(n) + a ribonucleoside 5'-triphosphate = RNA(n+1) + diphosphate. Its function is as follows. DNA-dependent RNA polymerase catalyzes the transcription of DNA into RNA using the four ribonucleoside triphosphates as substrates. This is DNA-directed RNA polymerase subunit alpha from Pelagibacter ubique (strain HTCC1062).